Consider the following 178-residue polypeptide: Probetacellulin (178 aa).

The first 31 residues, 1–31, serve as a signal peptide directing secretion; the sequence is MARAAPGSGASPLPLLPALALGLVILHCVVA. The Extracellular segment spans residues 32 to 118; that stretch reads DGNSTRSPED…LFYLRGDRGQ (87 aa). N-linked (GlcNAc...) asparagine glycosylation occurs at asparagine 34. The region spanning 65–105 is the EGF-like domain; sequence HFSRCPKQYKHYCIKGRCRFVVAEQTPSCVCDEGYAGARCE. Cystine bridges form between cysteine 69–cysteine 82, cysteine 77–cysteine 93, and cysteine 95–cysteine 104. Positions 112-178 are cleaved as a propeptide — removed in mature form; sequence LRGDRGQILV…NDDIQETSIA (67 aa). The helical transmembrane segment at 119 to 139 threads the bilayer; that stretch reads ILVICLIAVMVIFIILVVSIC. The Cytoplasmic portion of the chain corresponds to 140 to 178; it reads TCCHPLRKRRKRRKKEEEMETLGKDITPINDDIQETSIA.

In terms of assembly, monomer. Interacts with EGFR and ERBB4. As to expression, expressed in a wide range of tissues, including the mammary gland.

The protein localises to the secreted. It localises to the extracellular space. The protein resides in the cell membrane. In terms of biological role, growth factor that binds to EGFR, ERBB4 and other EGF receptor family members. Potent mitogen for retinal pigment epithelial cells and vascular smooth muscle cells. In Bos taurus (Bovine), this protein is Probetacellulin (BTC).